The sequence spans 165 residues: Ubiquitin-like protein 4B (165 aa).

In terms of domain architecture, Ubiquitin-like spans 1 to 76 (MFLTVKLLLG…ISVVVRPLEK (76 aa)). The tract at residues 139–165 (EPLAQPTGEREPEVLSPNKEEEKEAVQ) is disordered. Over residues 146–165 (GEREPEVLSPNKEEEKEAVQ) the composition is skewed to basic and acidic residues.

It is found in the cytoplasm. The polypeptide is Ubiquitin-like protein 4B (UBL4B) (Bos taurus (Bovine)).